The chain runs to 211 residues: ATP-dependent Clp protease proteolytic subunit (211 aa).

S114 (nucleophile) is an active-site residue. Residue H139 is part of the active site.

The protein belongs to the peptidase S14 family. As to quaternary structure, fourteen ClpP subunits assemble into 2 heptameric rings which stack back to back to give a disk-like structure with a central cavity, resembling the structure of eukaryotic proteasomes.

It localises to the cytoplasm. It catalyses the reaction Hydrolysis of proteins to small peptides in the presence of ATP and magnesium. alpha-casein is the usual test substrate. In the absence of ATP, only oligopeptides shorter than five residues are hydrolyzed (such as succinyl-Leu-Tyr-|-NHMec, and Leu-Tyr-Leu-|-Tyr-Trp, in which cleavage of the -Tyr-|-Leu- and -Tyr-|-Trp bonds also occurs).. Its function is as follows. Cleaves peptides in various proteins in a process that requires ATP hydrolysis. Has a chymotrypsin-like activity. Plays a major role in the degradation of misfolded proteins. This is ATP-dependent Clp protease proteolytic subunit from Pseudomonas fluorescens (strain ATCC BAA-477 / NRRL B-23932 / Pf-5).